We begin with the raw amino-acid sequence, 492 residues long: 2,3-bisphosphoglycerate-independent phosphoglycerate mutase (492 aa).

Residues aspartate 11 and serine 61 each coordinate Mn(2+). Serine 61 serves as the catalytic Phosphoserine intermediate. Substrate-binding positions include histidine 118, 147–148 (RD), arginine 178, arginine 184, 248–251 (RNDR), and lysine 320. Mn(2+) contacts are provided by aspartate 386, histidine 390, aspartate 427, histidine 428, and histidine 445.

This sequence belongs to the BPG-independent phosphoglycerate mutase family. As to quaternary structure, monomer. Mn(2+) is required as a cofactor.

It carries out the reaction (2R)-2-phosphoglycerate = (2R)-3-phosphoglycerate. It participates in carbohydrate degradation; glycolysis; pyruvate from D-glyceraldehyde 3-phosphate: step 3/5. Catalyzes the interconversion of 2-phosphoglycerate and 3-phosphoglycerate. In Campylobacter jejuni subsp. jejuni serotype O:6 (strain 81116 / NCTC 11828), this protein is 2,3-bisphosphoglycerate-independent phosphoglycerate mutase.